The following is a 234-amino-acid chain: 1-(5-phosphoribosyl)-5-[(5-phosphoribosylamino)methylideneamino] imidazole-4-carboxamide isomerase (234 aa).

The active-site Proton acceptor is Asp-9. Asp-131 functions as the Proton donor in the catalytic mechanism.

It belongs to the HisA/HisF family.

It is found in the cytoplasm. It catalyses the reaction 1-(5-phospho-beta-D-ribosyl)-5-[(5-phospho-beta-D-ribosylamino)methylideneamino]imidazole-4-carboxamide = 5-[(5-phospho-1-deoxy-D-ribulos-1-ylimino)methylamino]-1-(5-phospho-beta-D-ribosyl)imidazole-4-carboxamide. It functions in the pathway amino-acid biosynthesis; L-histidine biosynthesis; L-histidine from 5-phospho-alpha-D-ribose 1-diphosphate: step 4/9. This Staphylococcus aureus (strain JH1) protein is 1-(5-phosphoribosyl)-5-[(5-phosphoribosylamino)methylideneamino] imidazole-4-carboxamide isomerase.